The sequence spans 106 residues: Thiosulfate sulfurtransferase GlpE (106 aa).

The Rhodanese domain maps to 17–105; sequence SRGEARLVDI…WHRASLPVEA (89 aa). Cysteine 65 acts as the Cysteine persulfide intermediate in catalysis.

The protein belongs to the GlpE family.

Its subcellular location is the cytoplasm. It catalyses the reaction thiosulfate + hydrogen cyanide = thiocyanate + sulfite + 2 H(+). The catalysed reaction is thiosulfate + [thioredoxin]-dithiol = [thioredoxin]-disulfide + hydrogen sulfide + sulfite + 2 H(+). In terms of biological role, transferase that catalyzes the transfer of sulfur from thiosulfate to thiophilic acceptors such as cyanide or dithiols. May function in a CysM-independent thiosulfate assimilation pathway by catalyzing the conversion of thiosulfate to sulfite, which can then be used for L-cysteine biosynthesis. The protein is Thiosulfate sulfurtransferase GlpE of Vibrio vulnificus (strain CMCP6).